Consider the following 236-residue polypeptide: Bidirectional sugar transporter SWEET2 (236 aa).

Residues 1-15 lie on the Extracellular side of the membrane; sequence MDVFAFNASLSMCKD. Asparagine 7 is a glycosylation site (N-linked (GlcNAc...) asparagine). A helical membrane pass occupies residues 16-36; it reads VAGIAGNIFAFGLFVSPMPTF. One can recognise a MtN3/slv 1 domain in the interval 18-103; the sequence is GIAGNIFAFG…ILFIMHTDKK (86 aa). Over 37 to 50 the chain is Cytoplasmic; the sequence is RRIMRNKSTEQFSG. Residues 51–71 form a helical membrane-spanning segment; the sequence is LPYIYALLNCLICLWYGTPFI. At 72–76 the chain is on the extracellular side; the sequence is SHSNA. The chain crosses the membrane as a helical span at residues 77–97; the sequence is MLMTVNSVGATFQLCYIILFI. The Cytoplasmic segment spans residues 98–108; sequence MHTDKKNKMKM. A helical membrane pass occupies residues 109–129; it reads LGLLFVVFAVVGVIVAGSLQI. Topologically, residues 130–137 are extracellular; it reads PDQLTRWY. A helical membrane pass occupies residues 138–158; that stretch reads FVGFLSCGSLVSMFASPLFVI. A MtN3/slv 2 domain is found at 138–221; sequence FVGFLSCGSL…LALYCYYHRN (84 aa). Residues 159–170 lie on the Cytoplasmic side of the membrane; it reads NLVIRTKSVEFM. Residues 171-191 traverse the membrane as a helical segment; that stretch reads PFYLSLSTFLMSASFLLYGLF. The Extracellular portion of the chain corresponds to 192–194; the sequence is NSD. A helical membrane pass occupies residues 195 to 215; that stretch reads AFVYTPNGIGTILGIVQLALY. Residues 216–236 lie on the Cytoplasmic side of the membrane; that stretch reads CYYHRNSIEEETKEPLIVSYV.

This sequence belongs to the SWEET sugar transporter family. In terms of assembly, forms heterooligomers with SWEET17.

It is found in the cell membrane. Functionally, mediates both low-affinity uptake and efflux of sugar across the plasma membrane. The polypeptide is Bidirectional sugar transporter SWEET2 (Arabidopsis thaliana (Mouse-ear cress)).